The sequence spans 619 residues: MLLSWLTVLGAGMVVLHFLQKLLFPYFWDDFWFVLKVVLIIIRLKKYEKRGELVTVLDKFLSHAKRQPRKPFIIYEGDIYTYQDVDKRSSRVAHVFLNHSSLKKGDTVALLMSNEPDFVHVWFGLAKLGCVVAFLNTNIRSNSLLNCIRACGPRALVVGADLLGTVEEILPSLSENISVWGMKDSVPQGVISLKEKLSTSPDEPVPRSHHVVSLLKSTCLYIFTSGTTGLPKAAVISQLQVLRGSAVLWAFGCTAHDIVYITLPLYHSSAAILGISGCVELGATCVLKKKFSASQFWSDCKKYDVTVFQYIGELCRYLCKQSKREGEKDHKVRLAIGNGIRSDVWREFLDRFGNIKVCELYAATESSISFMNYTGRIGAIGRTNLFYKLLSTFDLIKYDFQKDEPMRNEQGWCIHVKKGEPGLLISRVNAKNPFFGYAGPYKHTKDKLLCDVFKKGDVYLNTGDLIVQDQDNFLYFWDRTGDTFRWKGENVATTEVADVIGMLDFIQEANVYGVAISGYEGRAGMASIILKPNTSLDLEKVYEQVVTFLPAYACPRFLRIQEKMEATGTFKLLKHQLVEDGFNPLKISEPLYFMDNLKKSYVLLTRELYDQIMLGEIKL.

Transmembrane regions (helical) follow at residues 22–42 (LLFPYFWDDFWFVLKVVLIII) and 119–139 (VHVWFGLAKLGCVVAFLNTNI). Residue 221 to 232 (YIFTSGTTGLPK) coordinates AMP.

This sequence belongs to the ATP-dependent AMP-binding enzyme family. As to expression, strongly expressed in heart and localizes to cardiac myocytes. Expressed at moderate levels in placenta, testis, and adrenal glands. Expressed at very low levels in kidney, bladder and uterus.

It localises to the cell membrane. The protein resides in the sarcolemma. The catalysed reaction is a fatty acid(in) = a fatty acid(out). It catalyses the reaction hexadecanoate(out) = hexadecanoate(in). It carries out the reaction (9Z)-octadecenoate(out) = (9Z)-octadecenoate(in). The enzyme catalyses (9Z,12Z)-octadecadienoate(out) = (9Z,12Z)-octadecadienoate(in). The catalysed reaction is a very long-chain fatty acid + ATP + CoA = a very long-chain fatty acyl-CoA + AMP + diphosphate. It catalyses the reaction tetracosanoate + ATP + CoA = tetracosanoyl-CoA + AMP + diphosphate. It carries out the reaction a long-chain fatty acid + ATP + CoA = a long-chain fatty acyl-CoA + AMP + diphosphate. The enzyme catalyses (5Z,8Z,11Z,14Z)-eicosatetraenoate + ATP + CoA = (5Z,8Z,11Z,14Z)-eicosatetraenoyl-CoA + AMP + diphosphate. The catalysed reaction is (9Z)-octadecenoate + ATP + CoA = (9Z)-octadecenoyl-CoA + AMP + diphosphate. Its function is as follows. Mediates the import of long-chain fatty acids (LCFA) into the cell by facilitating their transport at the plasma membrane. Also functions as an acyl-CoA ligase catalyzing the ATP-dependent formation of fatty acyl-CoA using LCFA and very-long-chain fatty acids (VLCFA) as substrates. Plays a pivotal role in regulating available LCFA substrates from exogenous sources in tissues undergoing high levels of beta-oxidation such as the heart. The chain is Long-chain fatty acid transport protein 6 (SLC27A6) from Homo sapiens (Human).